The sequence spans 467 residues: Argininosuccinate lyase (467 aa).

The protein belongs to the lyase 1 family. Argininosuccinate lyase subfamily.

It localises to the cytoplasm. It carries out the reaction 2-(N(omega)-L-arginino)succinate = fumarate + L-arginine. It functions in the pathway amino-acid biosynthesis; L-arginine biosynthesis; L-arginine from L-ornithine and carbamoyl phosphate: step 3/3. The chain is Argininosuccinate lyase from Sinorhizobium fredii (strain NBRC 101917 / NGR234).